A 482-amino-acid chain; its full sequence is O-acyltransferase ausP (482 aa).

Active-site proton acceptor residues include histidine 180 and aspartate 412.

The protein belongs to the plant acyltransferase family. In terms of assembly, monomer.

The protein operates within secondary metabolite biosynthesis; terpenoid biosynthesis. Functionally, O-acyltransferase; part of the gene cluster B that mediates the biosynthesis of the fungal meroterpenoid acetoxydehydroaustin. The first step of the pathway is the synthesis of 3,5-dimethylorsellinic acid by the polyketide synthase ausA. 3,5-dimethylorsellinic acid is then prenylated by the polyprenyl transferase ausN. Further epoxidation by the FAD-dependent monooxygenase ausM and cyclization by the probable terpene cyclase ausL lead to the formation of protoaustinoid A. Protoaustinoid A is then oxidized to spiro-lactone preaustinoid A3 by the combined action of the FAD-binding monooxygenases ausB and ausC, and the dioxygenase ausE. Acid-catalyzed keto-rearrangement and ring contraction of the tetraketide portion of preaustinoid A3 by ausJ lead to the formation of preaustinoid A4. The aldo-keto reductase ausK, with the help of ausH, is involved in the next step by transforming preaustinoid A4 into isoaustinone which is in turn hydroxylated by the P450 monooxygenase ausI to form austinolide. The cytochrome P450 monooxygenase ausG then modifies austinolide to austinol. Austinol is further acetylated to austin by the O-acetyltransferase ausP, which spontaneously changes to dehydroaustin. The cytochrome P450 monooxygenase then converts dehydroaustin is into 7-dehydrodehydroaustin. The hydroxylation catalyzed by ausR permits the second O-acetyltransferase ausQ to add an additional acetyl group to the molecule, leading to the formation of acetoxydehydroaustin. Due to genetic rearrangements of the clusters and the subsequent loss of some enzymes, the end product of the Penicillium brasilianum austinoid biosynthesis clusters is acetoxydehydroaustin. The protein is O-acyltransferase ausP of Penicillium brasilianum.